The following is a 1084-amino-acid chain: AP-3 complex subunit beta-1 (1084 aa).

A compositionally biased stretch (polar residues) spans 1-11 (MSSNSFAYNEQ). Residues 1–26 (MSSNSFAYNEQSGGGEATELGQEATS) form a disordered region. A phosphoserine mark is found at S276 and S609. A disordered region spans residues 663–800 (AGKAKKENPD…KEKKTKQERN (138 aa)). Over residues 666–677 (AKKENPDKKFYS) the composition is skewed to basic and acidic residues. Acidic residues predominate over residues 678–717 (ESEEEEDSSESSSDSESESGSESGEDEEDDRSGDSAEDSG). Positions 718 to 729 (ESGSEPEAGKGR) are enriched in low complexity. A compositionally biased stretch (basic and acidic residues) spans 738-753 (GRGDSKDVDKEKENSK). S742 bears the Phosphoserine mark. Residues 754 to 767 (TSESSSGESSSIEE) are compositionally biased toward low complexity. Residues 768–781 (SSSDSESESESESE) show a composition bias toward acidic residues. Positions 782 to 800 (SESRKVTKEKEKKTKQERN) are enriched in basic and acidic residues.

Belongs to the adaptor complexes large subunit family. In terms of assembly, adaptor protein complex 3 (AP-3) is a heterotetramer composed of two large adaptins (delta-type subunit AP3D1 and beta-type subunit AP3B1 or AP3B2), a medium adaptin (mu-type subunit AP3M1 or AP3M2) and a small adaptin (sigma-type subunit APS1 or AP3S2). AP-3 associates with the BLOC-1 complex. Interacts with KIF3A; interaction is direct; interaction is impaired by pyrophosphorylation of AP3B1. Phosphorylated on serine residues. In terms of processing, pyrophosphorylation by 5-diphosphoinositol pentakisphosphate (5-IP7) impairs interaction with KIF3A. Serine pyrophosphorylation is achieved by Mg(2+)-dependent, but enzyme independent transfer of a beta-phosphate from a inositol pyrophosphate to a pre-phosphorylated serine residue.

It localises to the cytoplasmic vesicle. The protein resides in the clathrin-coated vesicle membrane. Its subcellular location is the golgi apparatus. Subunit of non-clathrin- and clathrin-associated adaptor protein complex 3 (AP-3) that plays a role in protein sorting in the late-Golgi/trans-Golgi network (TGN) and/or endosomes. The AP complexes mediate both the recruitment of clathrin to membranes and the recognition of sorting signals within the cytosolic tails of transmembrane cargo molecules. AP-3 appears to be involved in the sorting of a subset of transmembrane proteins targeted to lysosomes and lysosome-related organelles. In concert with the BLOC-1 complex, AP-3 is required to target cargos into vesicles assembled at cell bodies for delivery into neurites and nerve terminals. In Bos taurus (Bovine), this protein is AP-3 complex subunit beta-1 (AP3B1).